Consider the following 447-residue polypeptide: Tubulin beta-1 chain (447 aa).

Residues glutamine 11, glutamate 69, serine 138, glycine 142, threonine 143, glycine 144, asparagine 204, and asparagine 226 each coordinate GTP. Glutamate 69 is a Mg(2+) binding site.

It belongs to the tubulin family. In terms of assembly, dimer of alpha and beta chains. A typical microtubule is a hollow water-filled tube with an outer diameter of 25 nm and an inner diameter of 15 nM. Alpha-beta heterodimers associate head-to-tail to form protofilaments running lengthwise along the microtubule wall with the beta-tubulin subunit facing the microtubule plus end conferring a structural polarity. Microtubules usually have 13 protofilaments but different protofilament numbers can be found in some organisms and specialized cells. Mg(2+) serves as cofactor.

It is found in the cytoplasm. It localises to the cytoskeleton. Functionally, tubulin is the major constituent of microtubules, a cylinder consisting of laterally associated linear protofilaments composed of alpha- and beta-tubulin heterodimers. Microtubules grow by the addition of GTP-tubulin dimers to the microtubule end, where a stabilizing cap forms. Below the cap, tubulin dimers are in GDP-bound state, owing to GTPase activity of alpha-tubulin. The polypeptide is Tubulin beta-1 chain (benA) (Emericella nidulans (strain FGSC A4 / ATCC 38163 / CBS 112.46 / NRRL 194 / M139) (Aspergillus nidulans)).